The following is a 222-amino-acid chain: Probable nicotinate-nucleotide adenylyltransferase (222 aa).

Belongs to the NadD family.

It catalyses the reaction nicotinate beta-D-ribonucleotide + ATP + H(+) = deamido-NAD(+) + diphosphate. It participates in cofactor biosynthesis; NAD(+) biosynthesis; deamido-NAD(+) from nicotinate D-ribonucleotide: step 1/1. Its function is as follows. Catalyzes the reversible adenylation of nicotinate mononucleotide (NaMN) to nicotinic acid adenine dinucleotide (NaAD). This chain is Probable nicotinate-nucleotide adenylyltransferase, found in Pseudomonas syringae pv. tomato (strain ATCC BAA-871 / DC3000).